Here is a 466-residue protein sequence, read N- to C-terminus: L-seryl-tRNA(Sec) selenium transferase (466 aa).

K293 is subject to N6-(pyridoxal phosphate)lysine.

This sequence belongs to the SelA family. Requires pyridoxal 5'-phosphate as cofactor.

The protein resides in the cytoplasm. The enzyme catalyses L-seryl-tRNA(Sec) + selenophosphate + H(+) = L-selenocysteinyl-tRNA(Sec) + phosphate. It functions in the pathway aminoacyl-tRNA biosynthesis; selenocysteinyl-tRNA(Sec) biosynthesis; selenocysteinyl-tRNA(Sec) from L-seryl-tRNA(Sec) (bacterial route): step 1/1. Converts seryl-tRNA(Sec) to selenocysteinyl-tRNA(Sec) required for selenoprotein biosynthesis. The polypeptide is L-seryl-tRNA(Sec) selenium transferase (Desulfotalea psychrophila (strain LSv54 / DSM 12343)).